A 124-amino-acid chain; its full sequence is Large ribosomal subunit protein bL20 (124 aa).

Belongs to the bacterial ribosomal protein bL20 family.

Functionally, binds directly to 23S ribosomal RNA and is necessary for the in vitro assembly process of the 50S ribosomal subunit. It is not involved in the protein synthesizing functions of that subunit. The chain is Large ribosomal subunit protein bL20 from Ehrlichia canis (strain Jake).